The sequence spans 151 residues: UPF0178 protein PSHAb0045 (151 aa).

This sequence belongs to the UPF0178 family.

This is UPF0178 protein PSHAb0045 from Pseudoalteromonas translucida (strain TAC 125).